Here is a 287-residue protein sequence, read N- to C-terminus: UPF0276 protein ACIAD0933 (287 aa).

It belongs to the UPF0276 family.

This is UPF0276 protein ACIAD0933 from Acinetobacter baylyi (strain ATCC 33305 / BD413 / ADP1).